The sequence spans 407 residues: Probable tRNA sulfurtransferase (407 aa).

A THUMP domain is found at 61 to 165 (NEITYRLSKI…LDAIYMYEEV (105 aa)). ATP contacts are provided by residues 183–184 (ML), 208–209 (HF), R265, G287, and Q296.

The protein belongs to the ThiI family.

Its subcellular location is the cytoplasm. The enzyme catalyses [ThiI sulfur-carrier protein]-S-sulfanyl-L-cysteine + a uridine in tRNA + 2 reduced [2Fe-2S]-[ferredoxin] + ATP + H(+) = [ThiI sulfur-carrier protein]-L-cysteine + a 4-thiouridine in tRNA + 2 oxidized [2Fe-2S]-[ferredoxin] + AMP + diphosphate. The catalysed reaction is [ThiS sulfur-carrier protein]-C-terminal Gly-Gly-AMP + S-sulfanyl-L-cysteinyl-[cysteine desulfurase] + AH2 = [ThiS sulfur-carrier protein]-C-terminal-Gly-aminoethanethioate + L-cysteinyl-[cysteine desulfurase] + A + AMP + 2 H(+). Its pathway is cofactor biosynthesis; thiamine diphosphate biosynthesis. In terms of biological role, catalyzes the ATP-dependent transfer of a sulfur to tRNA to produce 4-thiouridine in position 8 of tRNAs, which functions as a near-UV photosensor. Also catalyzes the transfer of sulfur to the sulfur carrier protein ThiS, forming ThiS-thiocarboxylate. This is a step in the synthesis of thiazole, in the thiamine biosynthesis pathway. The sulfur is donated as persulfide by IscS. This is Probable tRNA sulfurtransferase from Staphylococcus aureus (strain bovine RF122 / ET3-1).